A 33-amino-acid chain; its full sequence is Cytochrome b6-f complex subunit 8 (33 aa).

A helical transmembrane segment spans residues 2–22 (LITLGWASLAALFSFSIAMVV).

It belongs to the PetN family. The 4 large subunits of the cytochrome b6-f complex are cytochrome b6, subunit IV (17 kDa polypeptide, PetD), cytochrome f and the Rieske protein, while the 4 small subunits are PetG, PetL, PetM and PetN. The complex functions as a dimer.

It localises to the plastid. The protein resides in the organellar chromatophore thylakoid membrane. Functionally, component of the cytochrome b6-f complex, which mediates electron transfer between photosystem II (PSII) and photosystem I (PSI), cyclic electron flow around PSI, and state transitions. This chain is Cytochrome b6-f complex subunit 8, found in Paulinella chromatophora.